The chain runs to 306 residues: D-alanine--D-alanine ligase (306 aa).

The 196-residue stretch at 100–295 (KQIFRRAGLP…FGQLLERLME (196 aa)) folds into the ATP-grasp domain. An ATP-binding site is contributed by 127 to 180 (RLPYPLFVKSNTGGSSLRLGRARNRAELDDIMGQIFAAGEEVIMEPVLPGREVT). 3 residues coordinate Mg(2+): Asp249, Glu262, and Asn264.

Belongs to the D-alanine--D-alanine ligase family. Mg(2+) serves as cofactor. Requires Mn(2+) as cofactor.

Its subcellular location is the cytoplasm. The enzyme catalyses 2 D-alanine + ATP = D-alanyl-D-alanine + ADP + phosphate + H(+). It participates in cell wall biogenesis; peptidoglycan biosynthesis. In terms of biological role, cell wall formation. In Desulfovibrio desulfuricans (strain ATCC 27774 / DSM 6949 / MB), this protein is D-alanine--D-alanine ligase.